We begin with the raw amino-acid sequence, 230 residues long: Probable fimbrial chaperone SfmC (230 aa).

Residues Met-1–Ala-23 form the signal peptide.

The protein belongs to the periplasmic pilus chaperone family.

It is found in the periplasm. Part of the sfmACDHF fimbrial operon. Could contribute to adhesion to various surfaces in specific environmental niches. Increases adhesion to eukaryotic T24 bladder epithelial cells in the absence of fim genes. This Escherichia coli (strain K12) protein is Probable fimbrial chaperone SfmC (sfmC).